We begin with the raw amino-acid sequence, 148 residues long: Lipid droplet organization protein LDO16 (148 aa).

Topologically, residues 1–7 are cytoplasmic; the sequence is MVSTATF. A helical membrane pass occupies residues 8–28; it reads FFFVYLTLFVVIGFFSSLFII. Position 29 (proline 29) is a topological domain, lumenal. A helical membrane pass occupies residues 30–50; sequence LLGISFVFAIGVVSFGFCSNM. Residues 51-148 lie on the Cytoplasmic side of the membrane; sequence SFKMAQLIYV…NKAGNKFQLS (98 aa). The disordered stretch occupies residues 83-110; sequence QEPQEPLSTLRPVSNPTIPSPLRQTARP. A compositionally biased stretch (polar residues) spans 93-109; sequence RPVSNPTIPSPLRQTAR. Serine 102 is modified (phosphoserine).

Belongs to the OSW5 family. As to quaternary structure, interacts specifically with the seipin complex FLD1-LDB16. Only a fraction appears to associate with the seipin core components, suggesting that it may be an ancillary subunit of the complex. Found to interact with many mitochondrial and peroxisomal proteins.

The protein localises to the endoplasmic reticulum membrane. It localises to the lipid droplet. Involved in lipid droplet (LD) organization. Functions primarily upon nutrient depletion, facilitating LD consumption by lipophagy. Required for correct LD distribution during entry into stationary phase, where LDs accumulate at nucleus-vacuole junction (NVJ) contact sites. Involved in membrane interaction in a manner similar to those of SNARE proteins, binding to partners present in mitochondria or peroxisomes. Its partner on the mitochondrion side might be TOM22, a mitochondrial outer membrane protein, linking lipid droplets and mitochondria by protein-protein interaction. Involved in spore wall assembly. The sequence is that of Lipid droplet organization protein LDO16 from Saccharomyces cerevisiae (strain ATCC 204508 / S288c) (Baker's yeast).